We begin with the raw amino-acid sequence, 25 residues long: MENGKVHVASMSGLSMPHMNEMLEK.

The interval 1 to 25 (MENGKVHVASMSGLSMPHMNEMLEK) is disordered.

This chain is Unknown protein 7, found in Pseudotsuga menziesii (Douglas-fir).